A 478-amino-acid polypeptide reads, in one-letter code: MSRRLRRTKIVCTMGPSTDRDNNLEKIIAAGANVVRMNFSHGTPDDHIGRAERVRSIAKKLGKTVAILGDLQGPKIRVSTFKDGKIFLNVGDKFILDAELPKGEGTQESVGLDYKTLPQDVVPGDILLLDDGRVQLKVLSTDGAKVFTEVTVGGPLSNNKGINKLGGGLSADALTEKDKADIITAARIGVDFLAVSFPRSSADLNYARELAQQAGLNAKIVAKVERAETVANDEAMDDIILASDVIMVARGDLGVEIGDPELVGVQKKLIRRSRQLNRAVITATQMMESMISNPMPTRAEVMDVANAVLDGTDAVMLSAETAAGQYPSETVAAMASVCLGAEKMPSINVSRHRMDKEFETIEESVAMSAMYAANHMKGVAAIVTLSSTGRTPLLMSRISSGLPIFALSRNQETLNLCALYRGVTPIYHGEESRTEAGAKAAPQSLKEKGYLSTGDLVLVTQGGQGATQTNVCRTLIVE.

A substrate-binding site is contributed by Arg-36. Asn-38, Ser-40, and Asp-70 together coordinate K(+). 38-41 is a binding site for ATP; sequence NFSH. 2 residues coordinate ATP: Arg-77 and Lys-160. Glu-225 contacts Mg(2+). Residues Gly-251, Asp-252, and Thr-284 each contribute to the substrate site. Mg(2+) is bound at residue Asp-252.

This sequence belongs to the pyruvate kinase family. As to quaternary structure, homotetramer. Mg(2+) is required as a cofactor. The cofactor is K(+).

It catalyses the reaction pyruvate + ATP = phosphoenolpyruvate + ADP + H(+). Its pathway is carbohydrate degradation; glycolysis; pyruvate from D-glyceraldehyde 3-phosphate: step 5/5. Its activity is regulated as follows. Allosterically activated by AMP and by several sugar phosphates. Belongs to type II PK. This chain is Pyruvate kinase (pykA), found in Haemophilus influenzae (strain ATCC 51907 / DSM 11121 / KW20 / Rd).